Here is a 215-residue protein sequence, read N- to C-terminus: Ras-related protein SEC4 (215 aa).

27–34 is a GTP binding site; it reads GDSGVGKS. The Effector region signature appears at 49–57; sequence FITTIGIDF. GTP contacts are provided by residues 75–79 and 133–136; these read DTAGQ and NKSD. 2 positions are modified to phosphoserine: Ser-201 and Ser-204. S-geranylgeranyl cysteine attachment occurs at residues Cys-214 and Cys-215.

This sequence belongs to the small GTPase superfamily. Rab family. In terms of assembly, interacts with the guanyl-nucleotide exchange factor SEC2. Interacts with SRO7, YIF1, YIP3, YIP4 and YIP5.

Its subcellular location is the cytoplasmic vesicle. It is found in the secretory vesicle membrane. The protein localises to the cell membrane. The protein resides in the cytoplasm. In terms of biological role, involved in exocytosis. Maybe by regulating the binding and fusion of secretory vesicles with the cell surface. The GTP-bound form of SEC4 may interact with an effector, thereby stimulating its activity and leading to exocytotic fusion. SEC4 may be an upstream activator of the 19.5S SEC8/SEC15 particle. SEC4 probably interacts directly with SEC8; it could serve as the attachment site for the SEC8/SEC15 particle. The chain is Ras-related protein SEC4 (SEC4) from Saccharomyces cerevisiae (strain ATCC 204508 / S288c) (Baker's yeast).